The chain runs to 184 residues: Intraflagellar transport protein 22 homolog (184 aa).

Residues 10 to 17 (GPTESGKT), 62 to 66 (DCGGD), and 122 to 125 (KKPG) each bind GTP.

Belongs to the small GTPase superfamily. Rab family.

The polypeptide is Intraflagellar transport protein 22 homolog (ift22) (Xenopus tropicalis (Western clawed frog)).